A 143-amino-acid polypeptide reads, in one-letter code: 3-dehydroquinate dehydratase (143 aa).

Catalysis depends on Y22, which acts as the Proton acceptor. Residues N73, H79, and D86 each contribute to the substrate site. H99 acts as the Proton donor in catalysis. Substrate is bound by residues 100-101 and R110; that span reads IS.

The protein belongs to the type-II 3-dehydroquinase family. As to quaternary structure, homododecamer.

The enzyme catalyses 3-dehydroquinate = 3-dehydroshikimate + H2O. Its pathway is metabolic intermediate biosynthesis; chorismate biosynthesis; chorismate from D-erythrose 4-phosphate and phosphoenolpyruvate: step 3/7. Catalyzes a trans-dehydration via an enolate intermediate. This chain is 3-dehydroquinate dehydratase, found in Salinispora arenicola (strain CNS-205).